The following is a 447-amino-acid chain: ATP-dependent protease ATPase subunit HslU (447 aa).

Residues Ile18, 60 to 65 (GVGKTE), Asp259, Glu325, and Arg397 contribute to the ATP site.

It belongs to the ClpX chaperone family. HslU subfamily. In terms of assembly, a double ring-shaped homohexamer of HslV is capped on each side by a ring-shaped HslU homohexamer. The assembly of the HslU/HslV complex is dependent on binding of ATP.

It localises to the cytoplasm. ATPase subunit of a proteasome-like degradation complex; this subunit has chaperone activity. The binding of ATP and its subsequent hydrolysis by HslU are essential for unfolding of protein substrates subsequently hydrolyzed by HslV. HslU recognizes the N-terminal part of its protein substrates and unfolds these before they are guided to HslV for hydrolysis. In Burkholderia cenocepacia (strain ATCC BAA-245 / DSM 16553 / LMG 16656 / NCTC 13227 / J2315 / CF5610) (Burkholderia cepacia (strain J2315)), this protein is ATP-dependent protease ATPase subunit HslU.